The sequence spans 368 residues: tRNA 2-selenouridine synthase (368 aa).

The Rhodanese domain occupies Phe-15–Glu-138. The active-site S-selanylcysteine intermediate is the Cys-98.

It belongs to the SelU family. In terms of assembly, monomer.

It catalyses the reaction 5-methylaminomethyl-2-thiouridine(34) in tRNA + selenophosphate + (2E)-geranyl diphosphate + H2O + H(+) = 5-methylaminomethyl-2-selenouridine(34) in tRNA + (2E)-thiogeraniol + phosphate + diphosphate. The catalysed reaction is 5-methylaminomethyl-2-thiouridine(34) in tRNA + (2E)-geranyl diphosphate = 5-methylaminomethyl-S-(2E)-geranyl-thiouridine(34) in tRNA + diphosphate. It carries out the reaction 5-methylaminomethyl-S-(2E)-geranyl-thiouridine(34) in tRNA + selenophosphate + H(+) = 5-methylaminomethyl-2-(Se-phospho)selenouridine(34) in tRNA + (2E)-thiogeraniol. The enzyme catalyses 5-methylaminomethyl-2-(Se-phospho)selenouridine(34) in tRNA + H2O = 5-methylaminomethyl-2-selenouridine(34) in tRNA + phosphate. Its function is as follows. Involved in the post-transcriptional modification of the uridine at the wobble position (U34) of tRNA(Lys), tRNA(Glu) and tRNA(Gln). Catalyzes the conversion of 2-thiouridine (S2U-RNA) to 2-selenouridine (Se2U-RNA). Acts in a two-step process involving geranylation of 2-thiouridine (S2U) to S-geranyl-2-thiouridine (geS2U) and subsequent selenation of the latter derivative to 2-selenouridine (Se2U) in the tRNA chain. In Shewanella baltica (strain OS223), this protein is tRNA 2-selenouridine synthase.